Consider the following 750-residue polypeptide: Neprilysin (750 aa).

Gly-2 carries the N-myristoyl glycine lipid modification. Topologically, residues 2–28 are cytoplasmic; that stretch reads GRSESQMDITDINAPKPKKKQRWTPLE. Phosphoserine occurs at positions 4 and 6. A Stop-transfer sequence motif is present at residues 16 to 23; that stretch reads PKPKKKQR. Residues 29-51 form a helical; Signal-anchor for type II membrane protein membrane-spanning segment; it reads ISLSVLVLLLTIIAVTMIALYAT. At 52 to 750 the chain is on the extracellular side; the sequence is YDDGICKSSD…MNPERKCRVW (699 aa). Positions 56-750 constitute a Peptidase M13 domain; sequence ICKSSDCIKS…MNPERKCRVW (695 aa). 6 disulfides stabilise this stretch: Cys-57–Cys-62, Cys-80–Cys-735, Cys-88–Cys-695, Cys-143–Cys-411, Cys-234–Cys-242, and Cys-621–Cys-747. Residue Arg-103 participates in a peptide binding. Asn-145 and Asn-211 each carry an N-linked (GlcNAc...) asparagine glycan. Residues Asn-285, Asn-311, and Asn-325 are each glycosylated (N-linked (GlcNAc...) asparagine). His-584 is a binding site for Zn(2+). Residue Glu-585 is part of the active site. His-588 contacts Zn(2+). Asn-628 is a glycosylation site (N-linked (GlcNAc...) asparagine). Position 647 (Glu-647) interacts with Zn(2+). Asp-651 acts as the Proton donor in catalysis.

Belongs to the peptidase M13 family. Zn(2+) serves as cofactor. Myristoylation is a determinant of membrane targeting. Post-translationally, glycosylation at Asn-628 is necessary both for surface expression and neutral endopeptidase activity.

The protein localises to the cell membrane. It carries out the reaction Preferential cleavage of polypeptides between hydrophobic residues, particularly with Phe or Tyr at P1'.. The enzyme catalyses substance P + H2O = substance P(1-9) + L-Leu-L-Met-NH2. It catalyses the reaction substance P + H2O = substance P(1-7) + L-Phe-Gly-L-Leu-L-Met-NH2. The catalysed reaction is neurotensin + H2O = neurotensin(1-11) + L-isoleucyl-L-leucine. It carries out the reaction neurotensin + H2O = neurotensin(1-10) + L-tyrosyl-L-isoleucyl-L-leucine. In terms of biological role, thermolysin-like specificity, but is almost confined on acting on polypeptides of up to 30 amino acids. Biologically important in the destruction of opioid peptides such as Met- and Leu-enkephalins by cleavage of a Gly-Phe bond. Catalyzes cleavage of bradykinin, substance P and neurotensin peptides. Able to cleave angiotensin-1, angiotensin-2 and angiotensin 1-9. Involved in the degradation of the atrial natriuretic factor (ANF). Displays UV-inducible elastase activity toward skin preelastic and elastic fibers. The protein is Neprilysin of Mus musculus (Mouse).